A 766-amino-acid polypeptide reads, in one-letter code: 1,4-alpha-glucan branching enzyme GlgB (766 aa).

Residue D431 is the Nucleophile of the active site. The Proton donor role is filled by E484.

The protein belongs to the glycosyl hydrolase 13 family. GlgB subfamily. As to quaternary structure, monomer.

The enzyme catalyses Transfers a segment of a (1-&gt;4)-alpha-D-glucan chain to a primary hydroxy group in a similar glucan chain.. The protein operates within glycan biosynthesis; glycogen biosynthesis. Functionally, catalyzes the formation of the alpha-1,6-glucosidic linkages in glycogen by scission of a 1,4-alpha-linked oligosaccharide from growing alpha-1,4-glucan chains and the subsequent attachment of the oligosaccharide to the alpha-1,6 position. The chain is 1,4-alpha-glucan branching enzyme GlgB from Thermosynechococcus vestitus (strain NIES-2133 / IAM M-273 / BP-1).